A 188-amino-acid polypeptide reads, in one-letter code: Peptidyl-tRNA hydrolase (188 aa).

Y17 lines the tRNA pocket. Catalysis depends on H22, which acts as the Proton acceptor. Positions 65, 67, and 113 each coordinate tRNA.

Belongs to the PTH family. As to quaternary structure, monomer.

Its subcellular location is the cytoplasm. The enzyme catalyses an N-acyl-L-alpha-aminoacyl-tRNA + H2O = an N-acyl-L-amino acid + a tRNA + H(+). Functionally, hydrolyzes ribosome-free peptidyl-tRNAs (with 1 or more amino acids incorporated), which drop off the ribosome during protein synthesis, or as a result of ribosome stalling. Its function is as follows. Catalyzes the release of premature peptidyl moieties from peptidyl-tRNA molecules trapped in stalled 50S ribosomal subunits, and thus maintains levels of free tRNAs and 50S ribosomes. In Mycoplasma pneumoniae (strain ATCC 29342 / M129 / Subtype 1) (Mycoplasmoides pneumoniae), this protein is Peptidyl-tRNA hydrolase.